The sequence spans 509 residues: Lanosterol 14-alpha demethylase (509 aa).

Residues 30–50 (GNLLSMLLIACAFTLSLVYLI) form a helical membrane-spanning segment. Cys455 is a heme binding site.

This sequence belongs to the cytochrome P450 family. It depends on heme as a cofactor. Ubiquitinated by MARCHF6, leading to proteasomal degradation. Ubiquitously expressed with highest levels in testis, ovary, adrenal, prostate, liver, kidney and lung.

The protein resides in the endoplasmic reticulum membrane. Its subcellular location is the microsome membrane. It carries out the reaction a 14alpha-methyl steroid + 3 reduced [NADPH--hemoprotein reductase] + 3 O2 = a Delta(14) steroid + formate + 3 oxidized [NADPH--hemoprotein reductase] + 4 H2O + 4 H(+). The enzyme catalyses lanosterol + 3 reduced [NADPH--hemoprotein reductase] + 3 O2 = 4,4-dimethyl-5alpha-cholesta-8,14,24-trien-3beta-ol + formate + 3 oxidized [NADPH--hemoprotein reductase] + 4 H2O + 4 H(+). It catalyses the reaction 24,25-dihydrolanosterol + 3 reduced [NADPH--hemoprotein reductase] + 3 O2 = 4,4-dimethyl-8,14-cholestadien-3beta-ol + formate + 3 oxidized [NADPH--hemoprotein reductase] + 4 H2O + 4 H(+). The catalysed reaction is a 14alpha-methyl steroid + reduced [NADPH--hemoprotein reductase] + O2 = a 14alpha-hydroxymethyl steroid + oxidized [NADPH--hemoprotein reductase] + H2O + H(+). It carries out the reaction a 14alpha-hydroxymethyl steroid + reduced [NADPH--hemoprotein reductase] + O2 = a 14alpha-formyl steroid + oxidized [NADPH--hemoprotein reductase] + 2 H2O + H(+). The enzyme catalyses a 14alpha-formyl steroid + reduced [NADPH--hemoprotein reductase] + O2 = a Delta(14) steroid + formate + oxidized [NADPH--hemoprotein reductase] + H2O + 2 H(+). It catalyses the reaction lanosterol + reduced [NADPH--hemoprotein reductase] + O2 = 32-hydroxylanosterol + oxidized [NADPH--hemoprotein reductase] + H2O + H(+). The catalysed reaction is 32-hydroxylanosterol + reduced [NADPH--hemoprotein reductase] + O2 = 32-oxolanosterol + oxidized [NADPH--hemoprotein reductase] + 2 H2O + H(+). It carries out the reaction 32-oxolanosterol + reduced [NADPH--hemoprotein reductase] + O2 = 4,4-dimethyl-5alpha-cholesta-8,14,24-trien-3beta-ol + formate + oxidized [NADPH--hemoprotein reductase] + H2O + 2 H(+). The enzyme catalyses 24,25-dihydrolanosterol + reduced [NADPH--hemoprotein reductase] + O2 = 32-hydroxy-24,25-dihydrolanosterol + oxidized [NADPH--hemoprotein reductase] + H2O + H(+). It catalyses the reaction 32-hydroxy-24,25-dihydrolanosterol + reduced [NADPH--hemoprotein reductase] + O2 = 32-oxo-24,25-dihydrolanosterol + oxidized [NADPH--hemoprotein reductase] + 2 H2O + H(+). The catalysed reaction is 32-oxo-24,25-dihydrolanosterol + reduced [NADPH--hemoprotein reductase] + O2 = 4,4-dimethyl-8,14-cholestadien-3beta-ol + formate + oxidized [NADPH--hemoprotein reductase] + H2O + 2 H(+). It participates in steroid biosynthesis; zymosterol biosynthesis; zymosterol from lanosterol: step 1/6. Its activity is regulated as follows. Inhibited by azalanstat. Inhibited by azole antifungal agents ketoconazole, itraconazole and fluconazole. Its function is as follows. Sterol 14alpha-demethylase that plays a critical role in the cholesterol biosynthesis pathway, being cholesterol the major sterol component in mammalian membranes as well as a precursor for bile acid and steroid hormone synthesis. Cytochrome P450 monooxygenase that catalyzes the three-step oxidative removal of the 14alpha-methyl group (C-32) of sterols such as lanosterol (lanosta-8,24-dien-3beta-ol) and 24,25-dihydrolanosterol (DHL) in the form of formate, and converts the sterols to 4,4-dimethyl-5alpha-cholesta-8,14,24-trien-3beta-ol and 4,4-dimethyl-8,14-cholestadien-3beta-ol, respectively, which are intermediates of cholesterol biosynthesis. Can also demethylate substrates not intrinsic to mammals, such as eburicol (24-methylene-24,25-dihydrolanosterol), but at a lower rate than DHL. The chain is Lanosterol 14-alpha demethylase from Homo sapiens (Human).